The chain runs to 221 residues: Glutathione S-transferase A3 (221 aa).

Alanine 2 is subject to N-acetylalanine. Positions 3-83 (GKPVLHYFDG…YIASKYNLYG (81 aa)) constitute a GST N-terminal domain. Position 4 is an N6-succinyllysine (lysine 4). Glutathione is bound by residues tyrosine 9, arginine 45, 54-55 (QV), and 67-68 (QT). The GST C-terminal domain occupies 85-207 (DMKERAIIDM…LQPGSQRKPF (123 aa)).

As to quaternary structure, homodimer.

It is found in the cytoplasm. It catalyses the reaction RX + glutathione = an S-substituted glutathione + a halide anion + H(+). The catalysed reaction is androst-5-ene-3,17-dione = androst-4-ene-3,17-dione. The enzyme catalyses pregn-5-ene-3,20-dione = progesterone. Its function is as follows. Conjugation of reduced glutathione to a wide number of exogenous and endogenous hydrophobic electrophiles. Catalyzes isomerization reactions that contribute to the biosynthesis of steroid hormones. Efficiently catalyze obligatory double-bond isomerizations of delta(5)-androstene-3,17-dione and delta(5)-pregnene-3,20-dione, precursors to testosterone and progesterone, respectively. Has a high catalytic activity for aflatoxin B1-8,9 epoxide. This Mus musculus (Mouse) protein is Glutathione S-transferase A3.